The sequence spans 383 residues: Lipid-A-disaccharide synthase (383 aa).

The protein belongs to the LpxB family.

The catalysed reaction is a lipid X + a UDP-2-N,3-O-bis[(3R)-3-hydroxyacyl]-alpha-D-glucosamine = a lipid A disaccharide + UDP + H(+). It functions in the pathway bacterial outer membrane biogenesis; LPS lipid A biosynthesis. Condensation of UDP-2,3-diacylglucosamine and 2,3-diacylglucosamine-1-phosphate to form lipid A disaccharide, a precursor of lipid A, a phosphorylated glycolipid that anchors the lipopolysaccharide to the outer membrane of the cell. This is Lipid-A-disaccharide synthase from Alcanivorax borkumensis (strain ATCC 700651 / DSM 11573 / NCIMB 13689 / SK2).